The primary structure comprises 280 residues: Large ribosomal subunit protein uL2 (280 aa).

Disordered regions lie at residues 29-58 and 225-280; these read PEKSLLRPLSKTGGRNSHGHITTRHRGGGH and VMNP…NKKR. A compositionally biased stretch (basic residues) spans 45 to 58; it reads SHGHITTRHRGGGH. Over residues 253–269 the composition is skewed to basic and acidic residues; that stretch reads KEGRTRKPKRYSDDMIV. Positions 270–280 are enriched in basic residues; that stretch reads RRRRANKNKKR.

The protein belongs to the universal ribosomal protein uL2 family. As to quaternary structure, part of the 50S ribosomal subunit. Forms a bridge to the 30S subunit in the 70S ribosome.

One of the primary rRNA binding proteins. Required for association of the 30S and 50S subunits to form the 70S ribosome, for tRNA binding and peptide bond formation. It has been suggested to have peptidyltransferase activity; this is somewhat controversial. Makes several contacts with the 16S rRNA in the 70S ribosome. In Corynebacterium glutamicum (strain R), this protein is Large ribosomal subunit protein uL2.